The chain runs to 347 residues: Adenine deaminase (347 aa).

Zn(2+)-binding residues include His-16, His-18, and His-204. Glu-207 functions as the Proton donor in the catalytic mechanism. Position 285 (Asp-285) interacts with Zn(2+). Asp-286 serves as a coordination point for substrate.

It belongs to the metallo-dependent hydrolases superfamily. Adenosine and AMP deaminases family. Adenine deaminase type 2 subfamily. Zn(2+) serves as cofactor. In terms of processing, probably ubiquitinated when cells enter quiescence in response to nutrient limitation, since it is specifically degraded via a process requiring the F-box protein SAF1 and components of the SKP1-Cullin-F-box complex.

It localises to the cytoplasm. The protein localises to the nucleus. The enzyme catalyses adenine + H2O + H(+) = hypoxanthine + NH4(+). Functionally, catalyzes the hydrolytic deamination of adenine to hypoxanthine. Plays an important role in the purine salvage pathway and in nitrogen catabolism. Also exhibits a low activity towards N(6)-substituted adenines that are commonly known as the plant hormones cytokinins. The protein is Adenine deaminase of Saccharomyces cerevisiae (strain ATCC 204508 / S288c) (Baker's yeast).